The chain runs to 301 residues: Probable alpha-L-glutamate ligase 2 (301 aa).

Residues 104 to 287 enclose the ATP-grasp domain; sequence LQLLSRKGIG…VTEPIVEYIE (184 aa). ATP-binding positions include lysine 141, 178 to 179, aspartate 187, and 211 to 213; these read EY and RSN. Residues aspartate 248, glutamate 260, and asparagine 262 each contribute to the Mg(2+) site. Aspartate 248, glutamate 260, and asparagine 262 together coordinate Mn(2+).

Belongs to the RimK family. Mg(2+) serves as cofactor. Mn(2+) is required as a cofactor.

In Shewanella baltica (strain OS195), this protein is Probable alpha-L-glutamate ligase 2.